A 368-amino-acid chain; its full sequence is Phospho-N-acetylmuramoyl-pentapeptide-transferase (368 aa).

Transmembrane regions (helical) follow at residues 2-22 (IALI…TPLL), 51-71 (TLGG…SALY), 80-100 (PSWS…LGFI), 117-137 (GGKF…ALLI), 167-187 (VAII…TNAV), 193-213 (LDGL…IIAF), 234-254 (PLDL…FLWY), 271-291 (LGGL…AVVL), and 340-360 (FWMI…GDWV).

It belongs to the glycosyltransferase 4 family. MraY subfamily. It depends on Mg(2+) as a cofactor.

The protein resides in the cell membrane. It catalyses the reaction UDP-N-acetyl-alpha-D-muramoyl-L-alanyl-gamma-D-glutamyl-meso-2,6-diaminopimeloyl-D-alanyl-D-alanine + di-trans,octa-cis-undecaprenyl phosphate = di-trans,octa-cis-undecaprenyl diphospho-N-acetyl-alpha-D-muramoyl-L-alanyl-D-glutamyl-meso-2,6-diaminopimeloyl-D-alanyl-D-alanine + UMP. It functions in the pathway cell wall biogenesis; peptidoglycan biosynthesis. Its function is as follows. Catalyzes the initial step of the lipid cycle reactions in the biosynthesis of the cell wall peptidoglycan: transfers peptidoglycan precursor phospho-MurNAc-pentapeptide from UDP-MurNAc-pentapeptide onto the lipid carrier undecaprenyl phosphate, yielding undecaprenyl-pyrophosphoryl-MurNAc-pentapeptide, known as lipid I. The protein is Phospho-N-acetylmuramoyl-pentapeptide-transferase of Bifidobacterium longum (strain DJO10A).